Reading from the N-terminus, the 408-residue chain is Photox toxin (408 aa).

The disordered stretch occupies residues Asn-168–Lys-196. The span at Asn-184–Met-193 shows a compositional bias: pro residues. Positions Pro-190 to Asp-393 constitute a TR mART core domain. Catalysis depends on residues Arg-288, Ser-318, and Glu-355.

The protein in the C-terminal section; belongs to the SpvB family.

The catalysed reaction is L-arginyl-[protein] + NAD(+) = N(omega)-(ADP-D-ribosyl)-L-arginyl-[protein] + nicotinamide + H(+). In terms of biological role, mono-ADP-ribosylates chicken skeletal alpha-actin and human non-skeletal beta- and gamma-actin. Mono-ADP-ribosylates 'Arg-177' of yeast actin, blocking its ability to polymerize. Does not possess NAD(+)-glycohydrolase activity, unlike most mART enzymes. Upon expression in S.cerevisiae almost completely inhibits growth. The chain is Photox toxin (phxA) from Photorhabdus laumondii subsp. laumondii (strain DSM 15139 / CIP 105565 / TT01) (Photorhabdus luminescens subsp. laumondii).